Consider the following 161-residue polypeptide: Endoribonuclease YbeY (161 aa).

Histidine 121, histidine 125, and histidine 131 together coordinate Zn(2+).

The protein belongs to the endoribonuclease YbeY family. It depends on Zn(2+) as a cofactor.

It localises to the cytoplasm. In terms of biological role, single strand-specific metallo-endoribonuclease involved in late-stage 70S ribosome quality control and in maturation of the 3' terminus of the 16S rRNA. This Xylella fastidiosa (strain 9a5c) protein is Endoribonuclease YbeY.